The sequence spans 395 residues: Allantoicase (395 aa).

Belongs to the allantoicase family.

The enzyme catalyses allantoate + H2O = (S)-ureidoglycolate + urea. It participates in nitrogen metabolism; (S)-allantoin degradation; (S)-ureidoglycolate from allantoate (aminidohydrolase route): step 1/1. Its function is as follows. Utilization of purines as secondary nitrogen sources, when primary sources are limiting. The protein is Allantoicase (allc) of Danio rerio (Zebrafish).